The following is a 327-amino-acid chain: Methionine import ATP-binding protein MetN (327 aa).

In terms of domain architecture, ABC transporter spans V3 to L239. G36–S43 contributes to the ATP binding site.

Belongs to the ABC transporter superfamily. Methionine importer (TC 3.A.1.24) family. The complex is composed of two ATP-binding proteins (MetN), two transmembrane proteins (MetI) and a solute-binding protein (MetQ).

The protein resides in the cell inner membrane. It carries out the reaction L-methionine(out) + ATP + H2O = L-methionine(in) + ADP + phosphate + H(+). It catalyses the reaction D-methionine(out) + ATP + H2O = D-methionine(in) + ADP + phosphate + H(+). Its function is as follows. Part of the ABC transporter complex MetNIQ involved in methionine import. Responsible for energy coupling to the transport system. The sequence is that of Methionine import ATP-binding protein MetN from Helicobacter pylori (strain HPAG1).